The chain runs to 353 residues: UPF0283 membrane protein YcjF (353 aa).

Over residues 1–19 (MSEPLKPRIDFAEPLKEEP) the composition is skewed to basic and acidic residues. The segment at 1-48 (MSEPLKPRIDFAEPLKEEPTSAFKAQQTFSEAESHTFAPAAIDERPED) is disordered. At 1–69 (MSEPLKPRID…LRPKRSLWRK (69 aa)) the chain is on the periplasmic side. Residues 70-90 (MVMGGLALFGASVVGQGVQWT) form a helical membrane-spanning segment. The Cytoplasmic segment spans residues 91–99 (MNAWQTQDW). Residues 100–120 (VALGGCAAGALIVGAGVGSVV) traverse the membrane as a helical segment. Residues 121–212 (TEWWRLWRLR…ARREISRFAA (92 aa)) lie on the Periplasmic side of the membrane. The chain crosses the membrane as a helical span at residues 213–233 (ESTLMIAVSPLALVDMAFIAW). Over 234–353 (RNLRLINRIA…LQKSKSSPEK (120 aa)) the chain is Cytoplasmic.

Belongs to the UPF0283 family.

It localises to the cell inner membrane. This Salmonella typhi protein is UPF0283 membrane protein YcjF (ycjF).